Here is a 272-residue protein sequence, read N- to C-terminus: Biglycan (272 aa).

A signal peptide spans 1–16; it reads MWPLWLLASLLALSQA. Positions 17–37 are excised as a propeptide; the sequence is LPFEQKAFWDFTLDDGLPMLN. O-linked (Xyl...) (glycosaminoglycan) serine glycans are attached at residues Ser42 and Ser48. Residues 55-91 enclose the LRRNT domain; that stretch reads ALPPTFSAMCPFGCHCHLRVVQCSDLGLKAVPKEISP. 2 disulfides stabilise this stretch: Cys64/Cys70 and Cys68/Cys77. LRR repeat units lie at residues 92–113, 116–137, 138–161, 162–183, 186–209, 210–232, 233–254, and 255–272; these read DTTL…DFKG, HLYA…PSAP, DGLK…DLPE, TLNE…DLLR, KLYR…SFLP, TLRE…PDLK, LLQV…DFCP, and VGFG…LFNN.

It belongs to the small leucine-rich proteoglycan (SLRP) family. SLRP class I subfamily. Homodimer. Forms a ternary complex with MFAP2 and ELN. Post-translationally, the two attached glycosaminoglycan chains can be either chondroitin sulfate or dermatan sulfate. Found in several connective tissues, especially in articular cartilages.

It localises to the secreted. Its subcellular location is the extracellular space. It is found in the extracellular matrix. May be involved in collagen fiber assembly. The sequence is that of Biglycan (BGN) from Sus scrofa (Pig).